The following is a 264-amino-acid chain: MKAVVLALAVLFLTGSQARHFWQQDDPQSPWDRVKDFATVYVDAVKDSGRDYVSQFESSALGKQLNLHLLDNWDTLSNTVGRLREQLGPVTHEFWANLEKDTEWLRQEMNKDLEEVKVKVQPYLDDFQKKWQEEVERYREKVGPLGAELREGARQKLQELHEKLTPLGEDLRDRARVHVDALRTQLAPYSDQMRERLATRLAAIRDSPSLAVYHAKASEHLKTLSEKAKPALEDLRQGLMPVLENLKTTVLAAIDEASKKLNAQ.

The signal sequence occupies residues 1–18; sequence MKAVVLALAVLFLTGSQA. A run of 2 repeats spans residues 67–88 and 89–110. The 10 X approximate tandem repeats stretch occupies residues 67 to 264; that stretch reads LHLLDNWDTL…DEASKKLNAQ (198 aa). Met109 carries the methionine sulfoxide modification. The stretch at 111–121 is one 3; half-length repeat; sequence KDLEEVKVKVQ. Repeat copies occupy residues 122–143, 144–165, 166–187, 188–207, and 208–229. One copy of the 9; half-length repeat lies at 230–240; that stretch reads PALEDLRQGLM. Residues 241–264 form repeat 10; it reads PVLENLKTTVLAAIDEASKKLNAQ.

It belongs to the apolipoprotein A1/A4/E family. As to quaternary structure, homodimer. Interacts with APOA1BP and CLU. Component of a sperm activating protein complex (SPAP), consisting of APOA1, an immunoglobulin heavy chain, an immunoglobulin light chain and albumin. Interacts with NDRG1. Interacts with SCGB3A2. Interacts with NAXE and YJEFN3. Glycosylated. In terms of processing, palmitoylated. Post-translationally, phosphorylation sites are present in the extracellular medium.

Its subcellular location is the secreted. In terms of biological role, participates in the reverse transport of cholesterol from tissues to the liver for excretion by promoting cholesterol efflux from tissues and by acting as a cofactor for the lecithin cholesterol acyltransferase (LCAT). As part of the SPAP complex, activates spermatozoa motility. This chain is Apolipoprotein A-I (APOA1), found in Jaculus jaculus (Lesser Egyptian jerboa).